Reading from the N-terminus, the 289-residue chain is 4-diphosphocytidyl-2-C-methyl-D-erythritol kinase (289 aa).

K10 is an active-site residue. 94-104 lines the ATP pocket; it reads PVAAGLAGGSS. The active site involves D136.

The protein belongs to the GHMP kinase family. IspE subfamily.

It carries out the reaction 4-CDP-2-C-methyl-D-erythritol + ATP = 4-CDP-2-C-methyl-D-erythritol 2-phosphate + ADP + H(+). Its pathway is isoprenoid biosynthesis; isopentenyl diphosphate biosynthesis via DXP pathway; isopentenyl diphosphate from 1-deoxy-D-xylulose 5-phosphate: step 3/6. Functionally, catalyzes the phosphorylation of the position 2 hydroxy group of 4-diphosphocytidyl-2C-methyl-D-erythritol. In Bacillus anthracis, this protein is 4-diphosphocytidyl-2-C-methyl-D-erythritol kinase.